Consider the following 340-residue polypeptide: 4-hydroxy-2-oxovalerate aldolase (340 aa).

In terms of domain architecture, Pyruvate carboxyltransferase spans 8–260; the sequence is VILHDMSLRD…HHGVNLYDIM (253 aa). 16-17 lines the substrate pocket; that stretch reads RD. Asp-17 is a Mn(2+) binding site. His-20 (proton acceptor) is an active-site residue. Substrate-binding residues include Ser-170 and His-199. Residues His-199 and His-201 each contribute to the Mn(2+) site. A substrate-binding site is contributed by Tyr-290.

Belongs to the 4-hydroxy-2-oxovalerate aldolase family.

It carries out the reaction (S)-4-hydroxy-2-oxopentanoate = acetaldehyde + pyruvate. The chain is 4-hydroxy-2-oxovalerate aldolase from Shewanella halifaxensis (strain HAW-EB4).